Here is a 303-residue protein sequence, read N- to C-terminus: NAD kinase (303 aa).

The active-site Proton acceptor is D71. Residues 71-72 (DG), 145-146 (ND), R156, R173, D175, 186-191 (TGYSLS), and Q245 contribute to the NAD(+) site.

Belongs to the NAD kinase family. The cofactor is a divalent metal cation.

It is found in the cytoplasm. The enzyme catalyses NAD(+) + ATP = ADP + NADP(+) + H(+). Its function is as follows. Involved in the regulation of the intracellular balance of NAD and NADP, and is a key enzyme in the biosynthesis of NADP. Catalyzes specifically the phosphorylation on 2'-hydroxyl of the adenosine moiety of NAD to yield NADP. The polypeptide is NAD kinase (Magnetococcus marinus (strain ATCC BAA-1437 / JCM 17883 / MC-1)).